Here is a 336-residue protein sequence, read N- to C-terminus: Porphobilinogen deaminase (336 aa).

At Cys-251 the chain carries S-(dipyrrolylmethanemethyl)cysteine. 2 positions are modified to phosphoserine: Ser-327 and Ser-329.

This sequence belongs to the HMBS family. It depends on dipyrromethane as a cofactor.

The catalysed reaction is 4 porphobilinogen + H2O = hydroxymethylbilane + 4 NH4(+). The protein operates within porphyrin-containing compound metabolism; protoporphyrin-IX biosynthesis; coproporphyrinogen-III from 5-aminolevulinate: step 2/4. In terms of biological role, tetrapolymerization of the monopyrrole PBG into the hydroxymethylbilane pre-uroporphyrinogen in several discrete steps. This is Porphobilinogen deaminase (hem3) from Schizosaccharomyces pombe (strain 972 / ATCC 24843) (Fission yeast).